We begin with the raw amino-acid sequence, 457 residues long: Siroheme synthase (457 aa).

Positions 1–204 (MDHLPIFCQL…NDQKAITETT (204 aa)) are precorrin-2 dehydrogenase /sirohydrochlorin ferrochelatase. Residues 22 to 23 (DV) and 43 to 44 (LA) contribute to the NAD(+) site. Ser128 is modified (phosphoserine). Residues 216-457 (GEVVLVGAGP…RDKLNWFSNH (242 aa)) form a uroporphyrinogen-III C-methyltransferase region. S-adenosyl-L-methionine is bound at residue Pro225. Asp248 (proton acceptor) is an active-site residue. The active-site Proton donor is Lys270. Residues 301-303 (GGD), Ile306, 331-332 (TA), Met382, and Gly411 each bind S-adenosyl-L-methionine.

This sequence in the N-terminal section; belongs to the precorrin-2 dehydrogenase / sirohydrochlorin ferrochelatase family. In the C-terminal section; belongs to the precorrin methyltransferase family.

The enzyme catalyses uroporphyrinogen III + 2 S-adenosyl-L-methionine = precorrin-2 + 2 S-adenosyl-L-homocysteine + H(+). It carries out the reaction precorrin-2 + NAD(+) = sirohydrochlorin + NADH + 2 H(+). It catalyses the reaction siroheme + 2 H(+) = sirohydrochlorin + Fe(2+). The protein operates within cofactor biosynthesis; adenosylcobalamin biosynthesis; precorrin-2 from uroporphyrinogen III: step 1/1. It functions in the pathway cofactor biosynthesis; adenosylcobalamin biosynthesis; sirohydrochlorin from precorrin-2: step 1/1. It participates in porphyrin-containing compound metabolism; siroheme biosynthesis; precorrin-2 from uroporphyrinogen III: step 1/1. Its pathway is porphyrin-containing compound metabolism; siroheme biosynthesis; siroheme from sirohydrochlorin: step 1/1. The protein operates within porphyrin-containing compound metabolism; siroheme biosynthesis; sirohydrochlorin from precorrin-2: step 1/1. Functionally, multifunctional enzyme that catalyzes the SAM-dependent methylations of uroporphyrinogen III at position C-2 and C-7 to form precorrin-2 via precorrin-1. Then it catalyzes the NAD-dependent ring dehydrogenation of precorrin-2 to yield sirohydrochlorin. Finally, it catalyzes the ferrochelation of sirohydrochlorin to yield siroheme. This Escherichia coli O17:K52:H18 (strain UMN026 / ExPEC) protein is Siroheme synthase.